The primary structure comprises 99 residues: Malonate decarboxylase acyl carrier protein (99 aa).

S25 is subject to O-(phosphoribosyl dephospho-coenzyme A)serine.

Belongs to the MdcC family. Post-translationally, covalently binds the prosthetic group of malonate decarboxylase.

The protein localises to the cytoplasm. In terms of biological role, subunit of malonate decarboxylase, it is an acyl carrier protein to which acetyl and malonyl thioester residues are bound via a 2'-(5''-phosphoribosyl)-3'-dephospho-CoA prosthetic group and turn over during the catalytic mechanism. This is Malonate decarboxylase acyl carrier protein from Pseudomonas fluorescens (strain Pf0-1).